We begin with the raw amino-acid sequence, 257 residues long: MYQKLLLVPLLLTSALASPHDASSHQKFHQLNERAAFPIPASKGSQTFKEPYYVKGTYDGGMKTFGRGVKCTGQKEGGDKDAVFIVADGGILRNAIIGADQIEGVHCEGSCTIENVWWQEVCEDALTFKGTGTGVHKVIGGGAQGADDKVIQHNSGGSAIIQDFTVQNFGKLYRSCGNCKKQFKRTVQISGVKASNGKTLVGINPNLGDSATIDGCASSVKEICVEYEGTDNNGKEPKKAHSGPSNTCKFKEPLASC.

Positions 1–17 (MYQKLLLVPLLLTSALA) are cleaved as a signal peptide.

Belongs to the polysaccharide lyase 3 family. Requires Ca(2+) as cofactor.

Its subcellular location is the secreted. It carries out the reaction Eliminative cleavage of (1-&gt;4)-alpha-D-galacturonan to give oligosaccharides with 4-deoxy-alpha-D-galact-4-enuronosyl groups at their non-reducing ends.. Pectinolytic enzyme consist of four classes of enzymes: pectin lyase, polygalacturonase, pectin methylesterase and rhamnogalacturonase. Among pectinolytic enzymes, pectin lyase is the most important in depolymerization of pectin, since it cleaves internal glycosidic bonds of highly methylated pectins. Favors pectate, the anion, over pectin, the methyl ester. This Aspergillus flavus (strain ATCC 200026 / FGSC A1120 / IAM 13836 / NRRL 3357 / JCM 12722 / SRRC 167) protein is Probable pectate lyase E (plyE).